Here is a 513-residue protein sequence, read N- to C-terminus: Xylose import ATP-binding protein XylG (513 aa).

ABC transporter domains are found at residues 5–242 (LEMK…VGRE) and 259–505 (LRIE…LRSE). 37–44 (GENGSGKS) lines the ATP pocket.

This sequence belongs to the ABC transporter superfamily. Xylose importer (TC 3.A.1.2.4) family. The complex is composed of two ATP-binding proteins (XylG), two transmembrane proteins (XylH) and a solute-binding protein (XylF).

It is found in the cell inner membrane. The enzyme catalyses D-xylose(out) + ATP + H2O = D-xylose(in) + ADP + phosphate + H(+). In terms of biological role, part of the ABC transporter complex XylFGH involved in xylose import. Responsible for energy coupling to the transport system. This Escherichia coli (strain UTI89 / UPEC) protein is Xylose import ATP-binding protein XylG.